A 105-amino-acid chain; its full sequence is Fungal protease inhibitor-1 (105 aa).

A signal peptide spans 1-19 (MKAVITLLFLACILVVTYG). 6 cysteine pairs are disulfide-bonded: Cys23-Cys56, Cys28-Cys58, Cys33-Cys59, Cys42-Cys62, Cys72-Cys93, and Cys87-Cys98.

Functionally, inhibits proteases from the fungi A.oryzae and R.oryzae, trypsin and chymotrypsin. Does not inhibit protease from the bacterium B.licheniformis or papain. The polypeptide is Fungal protease inhibitor-1 (Antheraea mylitta (Tasar silkworm)).